The chain runs to 118 residues: Large ribosomal subunit protein bL19 (118 aa).

Belongs to the bacterial ribosomal protein bL19 family.

This protein is located at the 30S-50S ribosomal subunit interface and may play a role in the structure and function of the aminoacyl-tRNA binding site. This is Large ribosomal subunit protein bL19 from Aliarcobacter butzleri (strain RM4018) (Arcobacter butzleri).